Here is a 218-residue protein sequence, read N- to C-terminus: Histidine biosynthesis bifunctional protein HisIE (218 aa).

The interval 1-118 (MTDLSELNFD…DAPDTGLDGT (118 aa)) is phosphoribosyl-AMP cyclohydrolase. The segment at 119–218 (LERVYATITE…SGLKGPKEVG (100 aa)) is phosphoribosyl-ATP pyrophosphohydrolase.

This sequence in the N-terminal section; belongs to the PRA-CH family. It in the C-terminal section; belongs to the PRA-PH family.

It is found in the cytoplasm. It catalyses the reaction 1-(5-phospho-beta-D-ribosyl)-ATP + H2O = 1-(5-phospho-beta-D-ribosyl)-5'-AMP + diphosphate + H(+). The catalysed reaction is 1-(5-phospho-beta-D-ribosyl)-5'-AMP + H2O = 1-(5-phospho-beta-D-ribosyl)-5-[(5-phospho-beta-D-ribosylamino)methylideneamino]imidazole-4-carboxamide. The protein operates within amino-acid biosynthesis; L-histidine biosynthesis; L-histidine from 5-phospho-alpha-D-ribose 1-diphosphate: step 2/9. Its pathway is amino-acid biosynthesis; L-histidine biosynthesis; L-histidine from 5-phospho-alpha-D-ribose 1-diphosphate: step 3/9. The protein is Histidine biosynthesis bifunctional protein HisIE (hisI) of Deinococcus radiodurans (strain ATCC 13939 / DSM 20539 / JCM 16871 / CCUG 27074 / LMG 4051 / NBRC 15346 / NCIMB 9279 / VKM B-1422 / R1).